The sequence spans 484 residues: Glutamyl-tRNA(Gln) amidotransferase subunit A (484 aa).

Residues lysine 77 and serine 152 each act as charge relay system in the active site. Serine 176 serves as the catalytic Acyl-ester intermediate.

This sequence belongs to the amidase family. GatA subfamily. In terms of assembly, heterotrimer of A, B and C subunits.

The catalysed reaction is L-glutamyl-tRNA(Gln) + L-glutamine + ATP + H2O = L-glutaminyl-tRNA(Gln) + L-glutamate + ADP + phosphate + H(+). Functionally, allows the formation of correctly charged Gln-tRNA(Gln) through the transamidation of misacylated Glu-tRNA(Gln) in organisms which lack glutaminyl-tRNA synthetase. The reaction takes place in the presence of glutamine and ATP through an activated gamma-phospho-Glu-tRNA(Gln). The chain is Glutamyl-tRNA(Gln) amidotransferase subunit A from Lacticaseibacillus paracasei (strain ATCC 334 / BCRC 17002 / CCUG 31169 / CIP 107868 / KCTC 3260 / NRRL B-441) (Lactobacillus paracasei).